We begin with the raw amino-acid sequence, 357 residues long: 4-hydroxymandelate synthase (357 aa).

2 consecutive VOC domains span residues 5–129 and 158–309; these read EIDY…LIQR and GIDH…IFTA. His161 is a binding site for Fe cation. The substrate site is built by His161, Ser201, Thr214, His241, and Gln305. His241 provides a ligand contact to Fe cation. Position 320 (Glu320) interacts with Fe cation.

This sequence belongs to the 4HPPD family. Monomer. Fe cation serves as cofactor.

It catalyses the reaction 3-(4-hydroxyphenyl)pyruvate + O2 = (S)-4-hydroxymandelate + CO2. The protein operates within antibiotic biosynthesis; vancomycin biosynthesis. In terms of biological role, required to synthesize hydroxyphenylglycine, a recurring skeletal component of nonproteinogenic macrocyclic peptide antibiotics such as vancomycin. Catalyzes the conversion of p-hydroxyphenylpyruvate to p-hydroxymandelate. The decarboxylation and hydroxylation activities of HmaS show novel and distinct regioselectivity, compared to all other known p-hydroxyphenylpyruvate dioxygenases, by hydroxylating the benzylic position of the substrate instead of the phenyl ring. In Amycolatopsis orientalis (Nocardia orientalis), this protein is 4-hydroxymandelate synthase.